Reading from the N-terminus, the 52-residue chain is MNWVPSMRKLSDELLIESYFKATEMNLNRDFIELIENEIKRRSLGHIISVSS.

Forms a stable heterotetramer with KinA (comprising two molecules of each protein), by binding to the KinA dimerization/phosphotransfer domain.

Mediates a developmental checkpoint inhibiting initiation of sporulation (by preventing phosphorylation of spo0A) in response to defects in the replication initiation machinery. Inhibits autophosphorylation of the histidine protein kinase KinA, forming a molecular barricade that prevents productive interaction between the ATP-binding site in the catalytic domain and the phosphorylatable His in the phosphotransfer domain of KinA. Probably also inhibits the activity of KinB, but has relatively little effect on KinC. Has at least one target in vivo in addition to KinA as sda does not require KinA to inhibit sporulation. This chain is Sporulation inhibitor sda (sda), found in Bacillus subtilis (strain 168).